Here is a 302-residue protein sequence, read N- to C-terminus: Protein NEOXANTHIN-DEFICIENT 1 (302 aa).

In terms of biological role, required for neoxanthin biosynthesis. Probably not involved directly in the enzymatic conversion of violaxanthin to neoxanthin. Is necessary but not sufficient for neoxanthin synthesis. The chain is Protein NEOXANTHIN-DEFICIENT 1 from Oryza sativa subsp. japonica (Rice).